Reading from the N-terminus, the 84-residue chain is ATP synthase subunit c (84 aa).

2 helical membrane-spanning segments follow: residues 9–29 (IIGA…GFAI) and 54–74 (IVAG…LLFI).

This sequence belongs to the ATPase C chain family. F-type ATPases have 2 components, F(1) - the catalytic core - and F(0) - the membrane proton channel. F(1) has five subunits: alpha(3), beta(3), gamma(1), delta(1), epsilon(1). F(0) has three main subunits: a(1), b(2) and c(10-14). The alpha and beta chains form an alternating ring which encloses part of the gamma chain. F(1) is attached to F(0) by a central stalk formed by the gamma and epsilon chains, while a peripheral stalk is formed by the delta and b chains.

It localises to the cell inner membrane. Its function is as follows. F(1)F(0) ATP synthase produces ATP from ADP in the presence of a proton or sodium gradient. F-type ATPases consist of two structural domains, F(1) containing the extramembraneous catalytic core and F(0) containing the membrane proton channel, linked together by a central stalk and a peripheral stalk. During catalysis, ATP synthesis in the catalytic domain of F(1) is coupled via a rotary mechanism of the central stalk subunits to proton translocation. In terms of biological role, key component of the F(0) channel; it plays a direct role in translocation across the membrane. A homomeric c-ring of between 10-14 subunits forms the central stalk rotor element with the F(1) delta and epsilon subunits. The sequence is that of ATP synthase subunit c from Actinobacillus pleuropneumoniae serotype 7 (strain AP76).